Reading from the N-terminus, the 394-residue chain is Phosphoglycerate kinase (394 aa).

Substrate contacts are provided by residues 21-23 (DLN), R37, 60-63 (HLGR), R115, and R148. Residues K199, E321, and 347-350 (GGDT) each bind ATP.

This sequence belongs to the phosphoglycerate kinase family. Monomer.

Its subcellular location is the cytoplasm. The catalysed reaction is (2R)-3-phosphoglycerate + ATP = (2R)-3-phospho-glyceroyl phosphate + ADP. Its pathway is carbohydrate degradation; glycolysis; pyruvate from D-glyceraldehyde 3-phosphate: step 2/5. In Aromatoleum aromaticum (strain DSM 19018 / LMG 30748 / EbN1) (Azoarcus sp. (strain EbN1)), this protein is Phosphoglycerate kinase.